A 385-amino-acid polypeptide reads, in one-letter code: Succinate--CoA ligase [ADP-forming] subunit beta (385 aa).

Residues 9–244 form the ATP-grasp domain; that stretch reads KEVLRKYGVS…LDEEDPKEIE (236 aa). ATP-binding positions include Lys-46, 53 to 55, Glu-99, Cys-102, and Glu-107; that span reads GRG. 2 residues coordinate Mg(2+): Asn-199 and Asp-213. Residue Ser-220 is modified to Phosphoserine. Substrate is bound by residues Asn-264 and 321–323; that span reads GIM.

Belongs to the succinate/malate CoA ligase beta subunit family. Heterotetramer of two alpha and two beta subunits. Interacts with BrxC. Requires Mg(2+) as cofactor.

It carries out the reaction succinate + ATP + CoA = succinyl-CoA + ADP + phosphate. The enzyme catalyses GTP + succinate + CoA = succinyl-CoA + GDP + phosphate. The protein operates within carbohydrate metabolism; tricarboxylic acid cycle; succinate from succinyl-CoA (ligase route): step 1/1. Functionally, succinyl-CoA synthetase functions in the citric acid cycle (TCA), coupling the hydrolysis of succinyl-CoA to the synthesis of either ATP or GTP and thus represents the only step of substrate-level phosphorylation in the TCA. The beta subunit provides nucleotide specificity of the enzyme and binds the substrate succinate, while the binding sites for coenzyme A and phosphate are found in the alpha subunit. This is Succinate--CoA ligase [ADP-forming] subunit beta from Bacillus subtilis (strain 168).